Consider the following 364-residue polypeptide: Aminomethyltransferase (364 aa).

This sequence belongs to the GcvT family. As to quaternary structure, the glycine cleavage system is composed of four proteins: P, T, L and H.

The enzyme catalyses N(6)-[(R)-S(8)-aminomethyldihydrolipoyl]-L-lysyl-[protein] + (6S)-5,6,7,8-tetrahydrofolate = N(6)-[(R)-dihydrolipoyl]-L-lysyl-[protein] + (6R)-5,10-methylene-5,6,7,8-tetrahydrofolate + NH4(+). In terms of biological role, the glycine cleavage system catalyzes the degradation of glycine. The protein is Aminomethyltransferase of Shewanella baltica (strain OS195).